The primary structure comprises 475 residues: uncharacterized protein (475 aa).

A coiled-coil region spans residues Glu185–Ile244.

This is an uncharacterized protein from Nora virus.